The following is a 342-amino-acid chain: Tetraacyldisaccharide 4'-kinase (342 aa).

ATP is bound at residue 68-75; sequence TVGGTGKT.

It belongs to the LpxK family.

The catalysed reaction is a lipid A disaccharide + ATP = a lipid IVA + ADP + H(+). It participates in glycolipid biosynthesis; lipid IV(A) biosynthesis; lipid IV(A) from (3R)-3-hydroxytetradecanoyl-[acyl-carrier-protein] and UDP-N-acetyl-alpha-D-glucosamine: step 6/6. Functionally, transfers the gamma-phosphate of ATP to the 4'-position of a tetraacyldisaccharide 1-phosphate intermediate (termed DS-1-P) to form tetraacyldisaccharide 1,4'-bis-phosphate (lipid IVA). This chain is Tetraacyldisaccharide 4'-kinase, found in Burkholderia cenocepacia (strain ATCC BAA-245 / DSM 16553 / LMG 16656 / NCTC 13227 / J2315 / CF5610) (Burkholderia cepacia (strain J2315)).